A 260-amino-acid polypeptide reads, in one-letter code: 5'-nucleotidase SurE (260 aa).

The a divalent metal cation site is built by aspartate 8, aspartate 9, serine 39, and asparagine 91.

The protein belongs to the SurE nucleotidase family. It depends on a divalent metal cation as a cofactor.

Its subcellular location is the cytoplasm. The catalysed reaction is a ribonucleoside 5'-phosphate + H2O = a ribonucleoside + phosphate. In terms of biological role, nucleotidase that shows phosphatase activity on nucleoside 5'-monophosphates. The chain is 5'-nucleotidase SurE from Acidovorax ebreus (strain TPSY) (Diaphorobacter sp. (strain TPSY)).